The chain runs to 377 residues: NADH dehydrogenase [ubiquinone] 1 alpha subcomplex subunit 9, mitochondrial (377 aa).

A mitochondrion-targeting transit peptide spans 1–35 (MAAAAQSRVVRVLSMSRSAITAIATSVCHGPPCRQ). Lys-175 is modified (N6-succinyllysine). Lys-189 and Lys-370 each carry N6-acetyllysine.

It belongs to the complex I NDUFA9 subunit family. As to quaternary structure, complex I is composed of 45 different subunits. This a component of the hydrophobic protein fraction. Interacts with BLOC1S1. Interacts with SLC2A4. Interacts with CLOCK. Interacts with RAB5IF. The cofactor is FAD. Acetylated on lysine residues. BLOC1S1 is required for acetylation. Acetylated by CLOCK in a circadian manner.

The protein resides in the mitochondrion matrix. Its function is as follows. Accessory subunit of the mitochondrial membrane respiratory chain NADH dehydrogenase (Complex I), that is believed not to be involved in catalysis. Required for proper complex I assembly. Complex I functions in the transfer of electrons from NADH to the respiratory chain. The immediate electron acceptor for the enzyme is believed to be ubiquinone. The sequence is that of NADH dehydrogenase [ubiquinone] 1 alpha subcomplex subunit 9, mitochondrial (NDUFA9) from Homo sapiens (Human).